Here is a 222-residue protein sequence, read N- to C-terminus: N-(5'-phosphoribosyl)anthranilate isomerase (222 aa).

Belongs to the TrpF family.

It catalyses the reaction N-(5-phospho-beta-D-ribosyl)anthranilate = 1-(2-carboxyphenylamino)-1-deoxy-D-ribulose 5-phosphate. It participates in amino-acid biosynthesis; L-tryptophan biosynthesis; L-tryptophan from chorismate: step 3/5. The sequence is that of N-(5'-phosphoribosyl)anthranilate isomerase from Symbiobacterium thermophilum (strain DSM 24528 / JCM 14929 / IAM 14863 / T).